The chain runs to 526 residues: Zinc finger protein Helios (526 aa).

Positions 28-94 (DLTSSTPNGQ…IESSEVADNR (67 aa)) are disordered. A compositionally biased stretch (polar residues) spans 29–50 (LTSSTPNGQHASPSHMTSTNSV). Serine 56 carries the post-translational modification Phosphoserine. Basic and acidic residues predominate over residues 61–77 (DRQPLSREDEIRGHDEG). 2 positions are modified to phosphoserine: serine 78 and serine 79. A Glycyl lysine isopeptide (Lys-Gly) (interchain with G-Cter in SUMO2) cross-link involves residue lysine 95. 4 consecutive C2H2-type zinc fingers follow at residues 112-134 (LKCD…KRSH), 140-162 (FHCN…IKLH), 168-190 (FKCP…LRTH), and 196-219 (HKCN…ERCH). Lysine 288 carries the post-translational modification N6-acetyllysine. Residues 368–379 (ISRETSDSHENN) are compositionally biased toward basic and acidic residues. Residues 368 to 435 (ISRETSDSHE…LNPKRKQSPA (68 aa)) form a disordered region. Glycyl lysine isopeptide (Lys-Gly) (interchain with G-Cter in SUMO2) cross-links involve residues lysine 442 and lysine 448. 2 C2H2-type zinc fingers span residues 471–493 (FKCE…MGCH) and 499–523 (LECN…RGEH).

This sequence belongs to the Ikaros C2H2-type zinc-finger protein family. As to quaternary structure, can form homodimers. Interacts with IKZF4 and IKZF5. Expressed in outer hair cells (OHC) of the organ of Corti. Abundant in thymus, low expression in bone marrow and brain and no detectable expression in spleen, liver, kidney or muscle. Expressed in T-cells.

The protein localises to the nucleus. Its function is as follows. Transcriptional regulator required for outer hair cells (OHC) maturation and, consequently, for hearing. This Mus musculus (Mouse) protein is Zinc finger protein Helios (Ikzf2).